The sequence spans 393 residues: S-adenosylmethionine synthase 3 (393 aa).

Glutamate 9 contacts Mg(2+). Histidine 15 is a binding site for ATP. A K(+)-binding site is contributed by glutamate 43. L-methionine is bound by residues glutamate 56 and glutamine 99. ATP-binding positions include 167–169 (DGK), 235–238 (SGRF), aspartate 246, 252–253 (RK), alanine 269, lysine 273, and lysine 277. Residue aspartate 246 participates in L-methionine binding. Lysine 277 is a binding site for L-methionine.

Belongs to the AdoMet synthase family. In terms of assembly, homotetramer. Requires Mn(2+) as cofactor. Mg(2+) serves as cofactor. Co(2+) is required as a cofactor. The cofactor is K(+).

The protein resides in the cytoplasm. The catalysed reaction is L-methionine + ATP + H2O = S-adenosyl-L-methionine + phosphate + diphosphate. It functions in the pathway amino-acid biosynthesis; S-adenosyl-L-methionine biosynthesis; S-adenosyl-L-methionine from L-methionine: step 1/1. Functionally, catalyzes the formation of S-adenosylmethionine from methionine and ATP. The reaction comprises two steps that are both catalyzed by the same enzyme: formation of S-adenosylmethionine (AdoMet) and triphosphate, and subsequent hydrolysis of the triphosphate. This is S-adenosylmethionine synthase 3 (SAM3) from Petunia hybrida (Petunia).